Consider the following 249-residue polypeptide: MADS-box transcription factor 18 (249 aa).

The 61-residue stretch at methionine 1 to serine 61 folds into the MADS-box domain. The K-box domain maps to glutamine 88–asparagine 179. The segment at asparagine 184–threonine 249 is disordered. Residues proline 210–asparagine 236 are compositionally biased toward polar residues.

As to expression, widely expressed. Transcripts accumulate to higher levels in organs that retain meristematic characteristics: in the apical meristem and in the meristematic leaf primordia formed on its flank; in the developing panicle at the early stage of rachis-branch primordia differentiation; in the procambium of the rachis branches and in all floral organ primordia.

It is found in the nucleus. Probable transcription factor. This is MADS-box transcription factor 18 (MADS18) from Oryza sativa subsp. indica (Rice).